We begin with the raw amino-acid sequence, 291 residues long: MIRNSKILMNKLKRIGLGQITSTNNKEDNFRKCKEMIEKAVENKVNLFCLPECFAFISGGIHQFESRDNAEYLDQKGGIIERYKDLAKQNNIWLSLGGFHEKILDDPNDMIYNTHLIIDSNGVIVCEYRKMHLFDVDIPSKGVKMNESKVVKGGNDLVVCDSPVGKLGLSICYDLRFPELYLSLRRMDAQILLVPSAFMKSTGEAHWKPLLQARAIENQTYVIAAAQTGDHHSKRSSYGHSMIIDPWGKVLHDLPDNLNDIAFVDIDLDYISTCRENIPVFNHKKLNNYKI.

Residues 13–268 form the CN hydrolase domain; the sequence is KRIGLGQITS…NDIAFVDIDL (256 aa). The Proton acceptor role is filled by glutamate 52. Lysine 130 (proton donor) is an active-site residue. Cysteine 172 acts as the Nucleophile in catalysis.

It belongs to the carbon-nitrogen hydrolase superfamily. NIT1/NIT2 family.

It carries out the reaction N-(4-oxoglutaryl)-L-cysteinylglycine + H2O = L-cysteinylglycine + 2-oxoglutarate. Catalyzes the hydrolysis of the amide bond in N-(4-oxoglutarate)-L-cysteinylglycine (deaminated glutathione), a metabolite repair reaction to dispose of the harmful deaminated glutathione. The protein is Deaminated glutathione amidase (nit1-1) of Dictyostelium discoideum (Social amoeba).